Consider the following 141-residue polypeptide: Drosulfakinins (141 aa).

The signal sequence occupies residues 1 to 31; that stretch reads MGLRSCTHLATLFMTLWAVAFCFLVVVPIPA. Positions 32–73 are excised as a propeptide; sequence QTTSLQNAKDDRRLQELESKIGAESDQTNANLVGPSFSRFGD. Phenylalanine 82 is subject to Phenylalanine amide. A propeptide spanning residues 86–111 is cleaved from the precursor; that stretch reads VPLISRPMIPIELDLLMDNDDERTKA. Tyrosine 117 is subject to Sulfotyrosine. The residue at position 122 (phenylalanine 122) is a Phenylalanine amide. Tyrosine 134 bears the Sulfotyrosine mark. The residue at position 139 (phenylalanine 139) is a Phenylalanine amide.

It belongs to the gastrin/cholecystokinin family.

The protein localises to the secreted. In terms of biological role, drosulfakinin-0 (DSK 0) plays diverse biological roles including regulating gut muscle contraction in adults but not in larvae. The polypeptide is Drosulfakinins (Drosophila simulans (Fruit fly)).